We begin with the raw amino-acid sequence, 396 residues long: 1-deoxy-D-xylulose 5-phosphate reductoisomerase (396 aa).

Positions 10, 11, 12, 13, 38, and 124 each coordinate NADPH. Lys-125 lines the 1-deoxy-D-xylulose 5-phosphate pocket. Residue Glu-126 participates in NADPH binding. Asp-150 contacts Mn(2+). 1-deoxy-D-xylulose 5-phosphate contacts are provided by Ser-151, Glu-152, Ser-179, and His-202. Mn(2+) is bound at residue Glu-152. Gly-208 contributes to the NADPH binding site. The 1-deoxy-D-xylulose 5-phosphate site is built by Ser-215, Asn-220, Lys-221, and Glu-224. Residue Glu-224 participates in Mn(2+) binding.

The protein belongs to the DXR family. The cofactor is Mg(2+). It depends on Mn(2+) as a cofactor.

The enzyme catalyses 2-C-methyl-D-erythritol 4-phosphate + NADP(+) = 1-deoxy-D-xylulose 5-phosphate + NADPH + H(+). The protein operates within isoprenoid biosynthesis; isopentenyl diphosphate biosynthesis via DXP pathway; isopentenyl diphosphate from 1-deoxy-D-xylulose 5-phosphate: step 1/6. Its function is as follows. Catalyzes the NADPH-dependent rearrangement and reduction of 1-deoxy-D-xylulose-5-phosphate (DXP) to 2-C-methyl-D-erythritol 4-phosphate (MEP). The polypeptide is 1-deoxy-D-xylulose 5-phosphate reductoisomerase (Ralstonia pickettii (strain 12J)).